Here is a 421-residue protein sequence, read N- to C-terminus: UDP-N-acetylglucosamine 1-carboxyvinyltransferase (421 aa).

Residue 22 to 23 (KN) participates in phosphoenolpyruvate binding. Arginine 93 is a binding site for UDP-N-acetyl-alpha-D-glucosamine. Cysteine 117 functions as the Proton donor in the catalytic mechanism. Cysteine 117 bears the 2-(S-cysteinyl)pyruvic acid O-phosphothioketal mark. UDP-N-acetyl-alpha-D-glucosamine is bound by residues 122–126 (RPVDL), aspartate 308, and isoleucine 330.

This sequence belongs to the EPSP synthase family. MurA subfamily.

The protein localises to the cytoplasm. It carries out the reaction phosphoenolpyruvate + UDP-N-acetyl-alpha-D-glucosamine = UDP-N-acetyl-3-O-(1-carboxyvinyl)-alpha-D-glucosamine + phosphate. Its pathway is cell wall biogenesis; peptidoglycan biosynthesis. Cell wall formation. Adds enolpyruvyl to UDP-N-acetylglucosamine. The protein is UDP-N-acetylglucosamine 1-carboxyvinyltransferase of Pseudomonas fluorescens (strain Pf0-1).